A 247-amino-acid chain; its full sequence is Synaptonemal complex central element protein 1-like (247 aa).

A coiled-coil region spans residues 71 to 196 (SEELGEAQAL…LQEARETWDS (126 aa)). The disordered stretch occupies residues 189 to 247 (EARETWDSPGNCGLKTELEELEGQSQRSPEAQNDKGEASQEEQHHLETSEELPRTGTLC). Residues 220-241 (QNDKGEASQEEQHHLETSEELP) are compositionally biased toward basic and acidic residues.

It belongs to the SYCE family. As to expression, isoform 1 is abundantly expressed in testis and weakly in ovary, it is not found in other tissues. Isoform 2 is expressed in testis and poorly in brain, heart, lung and other examined tissues.

May be involved in meiosis. Isoform 1 may be involved in meiosis during spermatogenesis while isoform 2 is probably related to a later stage of meiosis, in the development stage of secondary spermatocytes and spermatids. This is Synaptonemal complex central element protein 1-like (Syce1l) from Mus musculus (Mouse).